Here is a 584-residue protein sequence, read N- to C-terminus: Putative poly(A) polymerase catalytic subunit (584 aa).

Basic and acidic residues predominate over residues 522–531 (EAEISEKEET). The segment at 522-584 (EAEISEKEET…ENSLDSLTSD (63 aa)) is disordered. Positions 546–569 (SPNSSPNSSPNNSLNNSIDISTNN) are enriched in low complexity.

The protein belongs to the poxviridae poly(A) polymerase catalytic subunit family. Highly divergent.

It is found in the virion. The catalysed reaction is RNA(n) + ATP = RNA(n)-3'-adenine ribonucleotide + diphosphate. Functionally, polymerase that creates the 3'-poly(A) tail of mRNA's. The sequence is that of Putative poly(A) polymerase catalytic subunit from Acanthamoeba polyphaga (Amoeba).